The primary structure comprises 834 residues: Mannosyl-oligosaccharide glucosidase (834 aa).

Basic residues predominate over residues Met-1–Ala-10. A disordered region spans residues Met-1 to Gly-37. Residues Met-1–Ala-43 lie on the Cytoplasmic side of the membrane. The Endoplasmic reticulum targeting signature appears at Arg-3–Arg-9. Residues Arg-17 to Arg-31 are compositionally biased toward basic and acidic residues. Residues Leu-44–Leu-64 form a helical; Signal-anchor for type II membrane protein membrane-spanning segment. At Arg-65–Tyr-834 the chain is on the lumenal side. The interval Pro-74–Cys-136 is required for endoplasmic reticulum targeting. Catalysis depends on Asp-580, which acts as the Proton donor. A glycan (N-linked (GlcNAc...) asparagine) is linked at Asn-654. Catalysis depends on Glu-804, which acts as the Proton acceptor.

It belongs to the glycosyl hydrolase 63 family.

Its subcellular location is the endoplasmic reticulum membrane. The catalysed reaction is N(4)-(alpha-D-Glc-(1-&gt;2)-alpha-D-Glc-(1-&gt;3)-alpha-D-Glc-(1-&gt;3)-alpha-D-Man-(1-&gt;2)-alpha-D-Man-(1-&gt;2)-alpha-D-Man-(1-&gt;3)-[alpha-D-Man-(1-&gt;2)-alpha-D-Man-(1-&gt;3)-[alpha-D-Man-(1-&gt;2)-alpha-D-Man-(1-&gt;6)]-alpha-D-Man-(1-&gt;6)]-beta-D-Man-(1-&gt;4)-beta-D-GlcNAc-(1-&gt;4)-beta-D-GlcNAc)-L-asparaginyl-[protein] + H2O = N(4)-(alpha-D-Glc-(1-&gt;3)-alpha-D-Glc-(1-&gt;3)-alpha-D-Man-(1-&gt;2)-alpha-D-Man-(1-&gt;2)-alpha-D-Man-(1-&gt;3)-[alpha-D-Man-(1-&gt;2)-alpha-D-Man-(1-&gt;3)-[alpha-D-Man-(1-&gt;2)-alpha-D-Man-(1-&gt;6)]-alpha-D-Man-(1-&gt;6)]-beta-D-Man-(1-&gt;4)-beta-D-GlcNAc-(1-&gt;4)-beta-D-GlcNAc)-L-asparaginyl-[protein] + beta-D-glucose. It functions in the pathway glycan metabolism; N-glycan degradation. Its activity is regulated as follows. Inhibited by the deoxynojirimycin derivative N-9'-Methoxynonyl-1-Deoxynojirimycin. In the context of N-glycan degradation, cleaves the distal alpha 1,2-linked glucose residue from the Glc(3)Man(9)GlcNAc(2) oligosaccharide precursor in a highly specific manner. Its function is as follows. (Microbial infection) Required for successful influenza or dengue virus infection; inhibition of its activity by a deoxynojirimycin derivative prevents death in mice infected with lethal doses of influenza or dengue viruses, even when administrated after infection. This Mus musculus (Mouse) protein is Mannosyl-oligosaccharide glucosidase.